A 111-amino-acid chain; its full sequence is MSLPHCPKCNSEYTYEDNGMYICPECAYEWNDAEPAQESDELIVKDANGNLLADGDSVTIIKDLKVKGSSSMLKIGTKVKNIRLVEGDHNIDCKIDGFGPMKLKSEFVKKN.

The protein belongs to the YjdM family.

This Escherichia coli O6:H1 (strain CFT073 / ATCC 700928 / UPEC) protein is Protein YjdM (yjdM).